A 93-amino-acid polypeptide reads, in one-letter code: Parbolysin P5 (93 aa).

3 disulfides stabilise this stretch: Cys-16/Cys-37, Cys-22/Cys-33, and Cys-47/Cys-60.

The protein belongs to the worm cytolysin family. As to expression, localized within the skin and proboscis and are most readily isolated from body mucus secretions.

The protein resides in the secreted. Cytolysin that shows hemolytic activity (on bovine erythrocytes, HC(50)=5.75 mg/ml). This hemolytic activity is completely inhibited by small unilamelar vesicles composed of PC/PG, PC/PI and PC/PS in 1:1 molar ratios (with at least 100 mg/ml concentration). The polypeptide is Parbolysin P5 (Parborlasia corrugatus (Antarctic nemertean worm)).